We begin with the raw amino-acid sequence, 1308 residues long: Chromosome partition protein Smc (1308 aa).

Residue 34–41 (PNGCGKSN) coordinates ATP. The interval 115 to 181 (AAREASMEEV…VAEGQPSDAQ (67 aa)) is disordered. Low complexity predominate over residues 137–169 (TEAEATEQQAAPSEGAAPTTEATAPSTENEAAP). Residues 278–600 (ITKYKTKKRL…DTLRAEYATL (323 aa)) adopt a coiled-coil conformation. An SMC hinge domain is found at 637-757 (AGVLADFLEV…VPDPAIGREL (121 aa)). 2 coiled-coil regions span residues 791-1046 (SLKR…ELHA) and 1110-1148 (MALEEYKETAQRHEFLETQRKDLLDSIENTQNTIKEIDQ).

This sequence belongs to the SMC family. Homodimer.

It is found in the cytoplasm. In terms of biological role, required for chromosome condensation and partitioning. The chain is Chromosome partition protein Smc from Koribacter versatilis (strain Ellin345).